The chain runs to 459 residues: Ribulose bisphosphate carboxylase large chain (459 aa).

A propeptide spanning residues 1-2 (MS) is cleaved from the precursor. Residue P3 is modified to N-acetylproline. K14 carries the N6,N6,N6-trimethyllysine modification. 2 residues coordinate substrate: X123 and T173. K175 (proton acceptor) is an active-site residue. Position 177 (K177) interacts with substrate. Mg(2+) contacts are provided by K201, D203, and E204. K201 carries the post-translational modification N6-carboxylysine. H294 functions as the Proton acceptor in the catalytic mechanism. Substrate contacts are provided by R295, H327, and S379.

It belongs to the RuBisCO large chain family. Type I subfamily. As to quaternary structure, heterohexadecamer of 8 large chains and 8 small chains; disulfide-linked. The disulfide link is formed within the large subunit homodimers. It depends on Mg(2+) as a cofactor. In terms of processing, the disulfide bond which can form in the large chain dimeric partners within the hexadecamer appears to be associated with oxidative stress and protein turnover.

The protein resides in the plastid. The protein localises to the chloroplast. The catalysed reaction is 2 (2R)-3-phosphoglycerate + 2 H(+) = D-ribulose 1,5-bisphosphate + CO2 + H2O. It catalyses the reaction D-ribulose 1,5-bisphosphate + O2 = 2-phosphoglycolate + (2R)-3-phosphoglycerate + 2 H(+). In terms of biological role, ruBisCO catalyzes two reactions: the carboxylation of D-ribulose 1,5-bisphosphate, the primary event in carbon dioxide fixation, as well as the oxidative fragmentation of the pentose substrate in the photorespiration process. Both reactions occur simultaneously and in competition at the same active site. This is Ribulose bisphosphate carboxylase large chain from Corynocarpus laevigatus (New Zealand laurel).